The primary structure comprises 410 residues: Protein disulfide isomerase CRELD1 (410 aa).

The first 29 residues, 1-29 (MGMSRRMFLTVYGSLWLLLLLSRPGVSKP), serve as a signal peptide directing secretion. Over 30–352 (QLCQTCQNLV…GLFDDITDDE (323 aa)) the chain is Extracellular. The CXXC motif lies at 32 to 35 (CQTC). Intrachain disulfides connect Cys-32/Cys-35, Cys-141/Cys-155, Cys-149/Cys-167, and Cys-169/Cys-178. Residues 139 to 179 (LSCPGGTEKPCSGNGQCNGDGTRFGTGVCDCYTSYGGPVCM) form the EGF-like 1 domain. 2 FU repeats span residues 194–243 (HLVC…DHCK) and 254–301 (SYEC…ELPK). A CXXC motif is present at residues 264 to 267 (CIGC). 4 disulfide bridges follow: Cys-264-Cys-267, Cys-295-Cys-309, Cys-302-Cys-318, and Cys-320-Cys-331. Residues 291–332 (DVDECDSELPKCKGSHEECVNTEGSFTCVCEKDYSRIDGMCR) enclose the EGF-like 2; calcium-binding domain. Residues 353 to 373 (VVVLQQMFFGVVICALATLAA) form a helical membrane-spanning segment. Lys-374 is a topological domain (cytoplasmic). The helical transmembrane segment at 375–395 (GDMVFTAIFIGAVAAMAGYWL) threads the bilayer. Topologically, residues 396–410 (SEKGDRALDSFMKGR) are extracellular.

Belongs to the CRELD family.

It is found in the membrane. It catalyses the reaction Catalyzes the rearrangement of -S-S- bonds in proteins.. In terms of biological role, protein disulfide isomerase. Promotes the localization of acetylcholine receptors (AChRs) to the plasma membrane. The chain is Protein disulfide isomerase CRELD1 (creld1) from Xenopus tropicalis (Western clawed frog).